We begin with the raw amino-acid sequence, 335 residues long: MVEMFYDKDADLGALKGKIIAVMGYGSQGHAQAQNLHDSGLDVVIGLREGSRRWKQAEDDGLKVMTVADAAKAADVVQILLPDEIQSKVYYSEIEPGLEAGNSLVFSHGFNIHYNQIVPSKDLDVYMVAPKSPGHLVRRTYKEGAGVPGLIAVYQDASGNALEMALAHAKGVGCTRAGVIETTFREETETDLFGEQVDLCGGVASLIKTSFEVLVEAGYQPEMAYFETLHELKLIVDLIHEGGLEKMWYSVSNTAEYGGLTVGPQIINEESREAMYVALERIQNGEFAREFVLEGQTNHAVLTSMERLEKEHPVEVVGKKLRAMMPWLNSELNEE.

Positions 2 to 182 (VEMFYDKDAD…GCTRAGVIET (181 aa)) constitute a KARI N-terminal Rossmann domain. Residues 25 to 28 (YGSQ), Arg-48, Ser-51, and 83 to 86 (DEIQ) each bind NADP(+). His-108 is a catalytic residue. Residue Gly-134 participates in NADP(+) binding. The 146-residue stretch at 183–328 (TFREETETDL…KKLRAMMPWL (146 aa)) folds into the KARI C-terminal knotted domain. Residues Asp-191, Glu-195, Glu-227, and Glu-231 each contribute to the Mg(2+) site. Ser-252 provides a ligand contact to substrate.

Belongs to the ketol-acid reductoisomerase family. The cofactor is Mg(2+).

The enzyme catalyses (2R)-2,3-dihydroxy-3-methylbutanoate + NADP(+) = (2S)-2-acetolactate + NADPH + H(+). The catalysed reaction is (2R,3R)-2,3-dihydroxy-3-methylpentanoate + NADP(+) = (S)-2-ethyl-2-hydroxy-3-oxobutanoate + NADPH + H(+). It functions in the pathway amino-acid biosynthesis; L-isoleucine biosynthesis; L-isoleucine from 2-oxobutanoate: step 2/4. It participates in amino-acid biosynthesis; L-valine biosynthesis; L-valine from pyruvate: step 2/4. Functionally, involved in the biosynthesis of branched-chain amino acids (BCAA). Catalyzes an alkyl-migration followed by a ketol-acid reduction of (S)-2-acetolactate (S2AL) to yield (R)-2,3-dihydroxy-isovalerate. In the isomerase reaction, S2AL is rearranged via a Mg-dependent methyl migration to produce 3-hydroxy-3-methyl-2-ketobutyrate (HMKB). In the reductase reaction, this 2-ketoacid undergoes a metal-dependent reduction by NADPH to yield (R)-2,3-dihydroxy-isovalerate. In Methanococcoides burtonii (strain DSM 6242 / NBRC 107633 / OCM 468 / ACE-M), this protein is Ketol-acid reductoisomerase (NADP(+)).